Reading from the N-terminus, the 237-residue chain is Placenta-expressed transcript 1 protein (237 aa).

The N-terminal stretch at 1–27 (MLSLRSLLPHLGLFLCLALHLSPSLSA) is a signal peptide. 4 N-linked (GlcNAc...) asparagine glycosylation sites follow: asparagine 30, asparagine 67, asparagine 103, and asparagine 136. Over residues 145–162 (KMEQVQPSASTPIPESSE) the composition is skewed to polar residues. Residues 145–170 (KMEQVQPSASTPIPESSETSQTINTT) are disordered. A lipid anchor (GPI-anchor amidated serine) is attached at serine 218. Positions 219–237 (PLAGALHILLVFLISKLLF) are cleaved as a propeptide — removed in mature form.

N-glycosylated. Post-translationally, GPI-anchored. In terms of tissue distribution, present in hair follicle cells and sebaceous gland of skin, ciliated epithelial cells of trachea and bronchial tube, striated portion of submandibular gland, distal convoluted tubule cells of kidney, ciliated epithelial cells of oviduct, medulla of adrenal gland and anterior lobe of pituitary gland. Expressed in keratinocytes of the hair follicle at the trichilemmal zone corresponding to the terminally differentiated outermost suprabasal outer root sheath (ORS), including that of the sebaceous gland duct (SGD) and the directly adjacent upper distal end of the companion layer (CL). Expression is similar in all hair follicle growth stages. Also detected during both the early and late anagen phases above the bulge of stem cells. Expressed at the leading edge of the epidermal wound. Not expressed in the interfollicular epidermis (IFE), inner root sheath (IRS) and hair fiber. Highly expressed in placenta. Detected in mammary and prostate epithelia and in the pancreas (at protein level).

It is found in the apical cell membrane. In terms of biological role, modulates leading keratinocyte migration and cellular adhesion to matrix proteins during a wound-healing response and promotes wound repair. May play a role during trichilemmal differentiation of the hair follicle. The polypeptide is Placenta-expressed transcript 1 protein (Plet1) (Mus musculus (Mouse)).